Here is a 503-residue protein sequence, read N- to C-terminus: MEFSVKSGSPEKQRSACIVVGVFEPRRLSPIAEQLDKISDGYISALLRRGELEGKPGQTLLLHHVPNVLSERILLIGCGKERELDERQYKQVIQKTINTLNDTGSMEAVCFLTELHVKGRNTYWKVRQAVETAKESLYSFDQLKTTKSEPRRPLRKMVFNVPTRRELTSGERAIQHGLAIAAGIKAAKDLGNMPPNICNAGYLASQARQLADSYSKNIVTRVIGEQQMKELGMHSYLAVGNGSQNESLMSVIEYKGNPSEDARPIVLVGKGLTFDSGGISIKPAEGMDEMKYDMCGAAAVYGVMRMVAELQLPINVIGVLAGCENMPGGRAYRPGDVLTTMSGQTVEVLNTDAEGRLVLCDVLTYVERFEPEAVIDVATLTGACVIALGHHITGLMSNHNPLAHELIGASEQAGDRAWRLPLGDEYQEQLESNFADMANIGGRPGGAITAGCFLARFTRKYNWAHLDIAGTAWRSGKAKGATGRPVALLSQFLLNRAGFNGEE.

Mn(2+)-binding residues include Lys-270 and Asp-275. The active site involves Lys-282. Residues Asp-293, Asp-352, and Glu-354 each coordinate Mn(2+). The active site involves Arg-356.

This sequence belongs to the peptidase M17 family. Mn(2+) is required as a cofactor.

The protein resides in the cytoplasm. It carries out the reaction Release of an N-terminal amino acid, Xaa-|-Yaa-, in which Xaa is preferably Leu, but may be other amino acids including Pro although not Arg or Lys, and Yaa may be Pro. Amino acid amides and methyl esters are also readily hydrolyzed, but rates on arylamides are exceedingly low.. The enzyme catalyses Release of an N-terminal amino acid, preferentially leucine, but not glutamic or aspartic acids.. Functionally, presumably involved in the processing and regular turnover of intracellular proteins. Catalyzes the removal of unsubstituted N-terminal amino acids from various peptides. In Enterobacter sp. (strain 638), this protein is Probable cytosol aminopeptidase.